The chain runs to 397 residues: Acetate kinase (397 aa).

Mg(2+) is bound at residue Asn-8. Lys-15 is an ATP binding site. Arg-89 provides a ligand contact to substrate. The active-site Proton donor/acceptor is the Asp-146. ATP-binding positions include 206–210, 281–283, and 329–333; these read HLGNG, DLR, and GVGEN. Glu-382 contributes to the Mg(2+) binding site.

Belongs to the acetokinase family. Homodimer. Mg(2+) is required as a cofactor. It depends on Mn(2+) as a cofactor.

The protein resides in the cytoplasm. It catalyses the reaction acetate + ATP = acetyl phosphate + ADP. The protein operates within metabolic intermediate biosynthesis; acetyl-CoA biosynthesis; acetyl-CoA from acetate: step 1/2. Catalyzes the formation of acetyl phosphate from acetate and ATP. Can also catalyze the reverse reaction. The chain is Acetate kinase from Bacillus cereus (strain ATCC 10987 / NRS 248).